We begin with the raw amino-acid sequence, 216 residues long: uncharacterized protein (216 aa).

The 4Fe-4S ferredoxin-type domain maps to 18 to 47 (PPDSPIEDRCGSCNICVDSCPTGALVQGGQ). [4Fe-4S] cluster contacts are provided by C27, C30, C33, C37, C79, C82, and C86.

This is an uncharacterized protein from Geobacillus stearothermophilus (Bacillus stearothermophilus).